Reading from the N-terminus, the 267-residue chain is Small ribosomal subunit protein eS4 (267 aa).

In terms of domain architecture, S4 RNA-binding spans 42–104; it reads LPLILVLRNR…TKENFRLLFD (63 aa).

This sequence belongs to the eukaryotic ribosomal protein eS4 family.

It localises to the cytoplasm. The polypeptide is Small ribosomal subunit protein eS4 (rps4) (Dictyostelium discoideum (Social amoeba)).